Here is a 433-residue protein sequence, read N- to C-terminus: Enolase 2 (433 aa).

The segment at 34–56 (RGMVPSGASTGEHEAVELRDGDK) is disordered. Residues 44–56 (GEHEAVELRDGDK) are compositionally biased toward basic and acidic residues. Gln-163 serves as a coordination point for (2R)-2-phosphoglycerate. The active-site Proton donor is the Glu-205. Mg(2+) contacts are provided by Asp-243, Glu-290, and Asp-317. Residues Lys-342, Arg-371, Ser-372, and Lys-393 each contribute to the (2R)-2-phosphoglycerate site. The Proton acceptor role is filled by Lys-342.

This sequence belongs to the enolase family. The cofactor is Mg(2+).

Its subcellular location is the cytoplasm. The protein localises to the secreted. It is found in the cell surface. The enzyme catalyses (2R)-2-phosphoglycerate = phosphoenolpyruvate + H2O. It participates in carbohydrate degradation; glycolysis; pyruvate from D-glyceraldehyde 3-phosphate: step 4/5. In terms of biological role, catalyzes the reversible conversion of 2-phosphoglycerate (2-PG) into phosphoenolpyruvate (PEP). It is essential for the degradation of carbohydrates via glycolysis. The polypeptide is Enolase 2 (Lactococcus lactis subsp. cremoris (strain SK11)).